The following is a 464-amino-acid chain: tRNA modification GTPase MnmE (464 aa).

3 residues coordinate (6S)-5-formyl-5,6,7,8-tetrahydrofolate: R25, E87, and K130. The 161-residue stretch at G226–G386 folds into the TrmE-type G domain. Residue N236 coordinates K(+). Residues N236–S241, T255–T261, and D280–G283 contribute to the GTP site. S240 is a Mg(2+) binding site. T255, I257, and T260 together coordinate K(+). T261 provides a ligand contact to Mg(2+). Residue K464 participates in (6S)-5-formyl-5,6,7,8-tetrahydrofolate binding.

Belongs to the TRAFAC class TrmE-Era-EngA-EngB-Septin-like GTPase superfamily. TrmE GTPase family. As to quaternary structure, homodimer. Heterotetramer of two MnmE and two MnmG subunits. The cofactor is K(+).

It localises to the cytoplasm. Its function is as follows. Exhibits a very high intrinsic GTPase hydrolysis rate. Involved in the addition of a carboxymethylaminomethyl (cmnm) group at the wobble position (U34) of certain tRNAs, forming tRNA-cmnm(5)s(2)U34. This is tRNA modification GTPase MnmE from Burkholderia ambifaria (strain ATCC BAA-244 / DSM 16087 / CCUG 44356 / LMG 19182 / AMMD) (Burkholderia cepacia (strain AMMD)).